The chain runs to 361 residues: Peptide chain release factor 1 (361 aa).

Q235 is subject to N5-methylglutamine.

This sequence belongs to the prokaryotic/mitochondrial release factor family. Methylated by PrmC. Methylation increases the termination efficiency of RF1.

The protein resides in the cytoplasm. Functionally, peptide chain release factor 1 directs the termination of translation in response to the peptide chain termination codons UAG and UAA. This is Peptide chain release factor 1 from Xanthomonas campestris pv. campestris (strain B100).